A 571-amino-acid chain; its full sequence is Sulfite reductase [NADPH] hemoprotein beta-component (571 aa).

[4Fe-4S] cluster-binding residues include Cys436, Cys442, Cys481, and Cys485. Residue Cys485 coordinates siroheme.

It belongs to the nitrite and sulfite reductase 4Fe-4S domain family. In terms of assembly, alpha(8)-beta(8). The alpha component is a flavoprotein, the beta component is a hemoprotein. Siroheme serves as cofactor. [4Fe-4S] cluster is required as a cofactor.

It carries out the reaction hydrogen sulfide + 3 NADP(+) + 3 H2O = sulfite + 3 NADPH + 4 H(+). It participates in sulfur metabolism; hydrogen sulfide biosynthesis; hydrogen sulfide from sulfite (NADPH route): step 1/1. Component of the sulfite reductase complex that catalyzes the 6-electron reduction of sulfite to sulfide. This is one of several activities required for the biosynthesis of L-cysteine from sulfate. This Bacillus subtilis (strain 168) protein is Sulfite reductase [NADPH] hemoprotein beta-component (cysI).